The primary structure comprises 221 residues: MHKITLIRLRGYREWTESLGPRREHIIQTVQAKIHSALWKYFTSIGALPHHLRYDFSLALTTNIETGRVGEVVAKIKRISPVDVEFCEGVGRTPREAYENCGATPGESAGVSVVAHMDVVDSTAATNKNGPLYVYRLIQRTISTIDSGCENLGCLAFYLGGDNIMLLLPNVDAIYQVLRDVELSVRVGVGVAKKPYNAFVKATRGLDYMRVKGRVGVKVVK.

It belongs to the archaeal-type GTP cyclohydrolase family.

It carries out the reaction GTP + 3 H2O = 2-amino-5-formylamino-6-(5-phospho-D-ribosylamino)pyrimidin-4(3H)-one + 2 phosphate + 2 H(+). Its function is as follows. Catalyzes the formation of 2-amino-5-formylamino-6-ribofuranosylamino-4(3H)-pyrimidinone ribonucleotide monophosphate and inorganic phosphate from GTP. Also has an independent pyrophosphate phosphohydrolase activity. The sequence is that of GTP cyclohydrolase III from Pyrobaculum aerophilum (strain ATCC 51768 / DSM 7523 / JCM 9630 / CIP 104966 / NBRC 100827 / IM2).